Here is a 336-residue protein sequence, read N- to C-terminus: tRNA (guanine(37)-N(1))-methyltransferase Trm5b (336 aa).

S-adenosyl-L-methionine-binding positions include Arg-186, 223–224, 251–252, and Asn-265; these read DI and DV.

It belongs to the class I-like SAM-binding methyltransferase superfamily. TRM5/TYW2 family. In terms of assembly, monomer.

Its subcellular location is the cytoplasm. It catalyses the reaction guanosine(37) in tRNA + S-adenosyl-L-methionine = N(1)-methylguanosine(37) in tRNA + S-adenosyl-L-homocysteine + H(+). Functionally, specifically methylates the N1 position of guanosine-37 in various tRNAs. The protein is tRNA (guanine(37)-N(1))-methyltransferase Trm5b (trm5b) of Methanocaldococcus jannaschii (strain ATCC 43067 / DSM 2661 / JAL-1 / JCM 10045 / NBRC 100440) (Methanococcus jannaschii).